The following is a 408-amino-acid chain: Dual-specificity RNA methyltransferase RlmN (408 aa).

Glu-120 acts as the Proton acceptor in catalysis. The Radical SAM core domain occupies 126 to 375 (EEGRGTLCIS…IRTPRGRDIL (250 aa)). Cys-133 and Cys-378 are joined by a disulfide. [4Fe-4S] cluster-binding residues include Cys-140, Cys-144, and Cys-147. Residues 204 to 205 (GE), Ser-236, 258 to 260 (SLH), and Asn-335 each bind S-adenosyl-L-methionine. Cys-378 serves as the catalytic S-methylcysteine intermediate.

It belongs to the radical SAM superfamily. RlmN family. The cofactor is [4Fe-4S] cluster.

The protein localises to the cytoplasm. It carries out the reaction adenosine(2503) in 23S rRNA + 2 reduced [2Fe-2S]-[ferredoxin] + 2 S-adenosyl-L-methionine = 2-methyladenosine(2503) in 23S rRNA + 5'-deoxyadenosine + L-methionine + 2 oxidized [2Fe-2S]-[ferredoxin] + S-adenosyl-L-homocysteine. The enzyme catalyses adenosine(37) in tRNA + 2 reduced [2Fe-2S]-[ferredoxin] + 2 S-adenosyl-L-methionine = 2-methyladenosine(37) in tRNA + 5'-deoxyadenosine + L-methionine + 2 oxidized [2Fe-2S]-[ferredoxin] + S-adenosyl-L-homocysteine. Its function is as follows. Specifically methylates position 2 of adenine 2503 in 23S rRNA and position 2 of adenine 37 in tRNAs. m2A2503 modification seems to play a crucial role in the proofreading step occurring at the peptidyl transferase center and thus would serve to optimize ribosomal fidelity. The polypeptide is Dual-specificity RNA methyltransferase RlmN (Rhizobium leguminosarum bv. trifolii (strain WSM2304)).